The following is a 340-amino-acid chain: Uroporphyrinogen decarboxylase (340 aa).

Substrate contacts are provided by residues 21–25, D71, Y148, S203, and H316; that span reads RQAGR.

This sequence belongs to the uroporphyrinogen decarboxylase family. As to quaternary structure, homodimer.

The protein resides in the cytoplasm. It catalyses the reaction uroporphyrinogen III + 4 H(+) = coproporphyrinogen III + 4 CO2. Its pathway is porphyrin-containing compound metabolism; protoporphyrin-IX biosynthesis; coproporphyrinogen-III from 5-aminolevulinate: step 4/4. In terms of biological role, catalyzes the decarboxylation of four acetate groups of uroporphyrinogen-III to yield coproporphyrinogen-III. This chain is Uroporphyrinogen decarboxylase, found in Campylobacter lari (strain RM2100 / D67 / ATCC BAA-1060).